Reading from the N-terminus, the 84-residue chain is Exodeoxyribonuclease 7 small subunit (84 aa).

The protein belongs to the XseB family. As to quaternary structure, heterooligomer composed of large and small subunits.

The protein resides in the cytoplasm. The enzyme catalyses Exonucleolytic cleavage in either 5'- to 3'- or 3'- to 5'-direction to yield nucleoside 5'-phosphates.. Bidirectionally degrades single-stranded DNA into large acid-insoluble oligonucleotides, which are then degraded further into small acid-soluble oligonucleotides. This Yersinia pseudotuberculosis serotype O:3 (strain YPIII) protein is Exodeoxyribonuclease 7 small subunit.